Consider the following 343-residue polypeptide: Probable dual-specificity RNA methyltransferase RlmN (343 aa).

E91 functions as the Proton acceptor in the catalytic mechanism. The Radical SAM core domain maps to 97–327 (YKHGNSICVS…TTIRREMGSD (231 aa)). The cysteines at positions 104 and 332 are disulfide-linked. Residues C111, C115, and C118 each coordinate [4Fe-4S] cluster. S-adenosyl-L-methionine is bound by residues 158–159 (GE), S190, 213–215 (SLH), and N289. Residue C332 is the S-methylcysteine intermediate of the active site.

This sequence belongs to the radical SAM superfamily. RlmN family. The cofactor is [4Fe-4S] cluster.

The protein resides in the cytoplasm. It catalyses the reaction adenosine(2503) in 23S rRNA + 2 reduced [2Fe-2S]-[ferredoxin] + 2 S-adenosyl-L-methionine = 2-methyladenosine(2503) in 23S rRNA + 5'-deoxyadenosine + L-methionine + 2 oxidized [2Fe-2S]-[ferredoxin] + S-adenosyl-L-homocysteine. The catalysed reaction is adenosine(37) in tRNA + 2 reduced [2Fe-2S]-[ferredoxin] + 2 S-adenosyl-L-methionine = 2-methyladenosine(37) in tRNA + 5'-deoxyadenosine + L-methionine + 2 oxidized [2Fe-2S]-[ferredoxin] + S-adenosyl-L-homocysteine. Specifically methylates position 2 of adenine 2503 in 23S rRNA and position 2 of adenine 37 in tRNAs. The chain is Probable dual-specificity RNA methyltransferase RlmN from Clostridium novyi (strain NT).